The primary structure comprises 145 residues: 3-hydroxyacyl-[acyl-carrier-protein] dehydratase FabZ (145 aa).

His49 is a catalytic residue.

The protein belongs to the thioester dehydratase family. FabZ subfamily.

The protein localises to the cytoplasm. It carries out the reaction a (3R)-hydroxyacyl-[ACP] = a (2E)-enoyl-[ACP] + H2O. Its function is as follows. Involved in unsaturated fatty acids biosynthesis. Catalyzes the dehydration of short chain beta-hydroxyacyl-ACPs and long chain saturated and unsaturated beta-hydroxyacyl-ACPs. The chain is 3-hydroxyacyl-[acyl-carrier-protein] dehydratase FabZ from Rickettsia bellii (strain OSU 85-389).